The chain runs to 98 residues: Aspartyl/glutamyl-tRNA(Asn/Gln) amidotransferase subunit C (98 aa).

Belongs to the GatC family. As to quaternary structure, heterotrimer of A, B and C subunits.

It carries out the reaction L-glutamyl-tRNA(Gln) + L-glutamine + ATP + H2O = L-glutaminyl-tRNA(Gln) + L-glutamate + ADP + phosphate + H(+). It catalyses the reaction L-aspartyl-tRNA(Asn) + L-glutamine + ATP + H2O = L-asparaginyl-tRNA(Asn) + L-glutamate + ADP + phosphate + 2 H(+). Functionally, allows the formation of correctly charged Asn-tRNA(Asn) or Gln-tRNA(Gln) through the transamidation of misacylated Asp-tRNA(Asn) or Glu-tRNA(Gln) in organisms which lack either or both of asparaginyl-tRNA or glutaminyl-tRNA synthetases. The reaction takes place in the presence of glutamine and ATP through an activated phospho-Asp-tRNA(Asn) or phospho-Glu-tRNA(Gln). This chain is Aspartyl/glutamyl-tRNA(Asn/Gln) amidotransferase subunit C, found in Paenarthrobacter aurescens (strain TC1).